We begin with the raw amino-acid sequence, 147 residues long: Hemoglobin subunit beta-2 (147 aa).

In terms of domain architecture, Globin spans 3-147 (EWTDEERTII…VVSALGRQYH (145 aa)). Heme b is bound by residues histidine 64 and histidine 93.

The protein belongs to the globin family. As to quaternary structure, hb 2 is a heterotetramer of two alpha-2 and two beta-2 chains. Hb 3 is a heterotetramer of two alpha-1 and two beta-2 chains. As to expression, red blood cells.

Its function is as follows. Involved in oxygen transport from gills to the various peripheral tissues. This Gadus morhua (Atlantic cod) protein is Hemoglobin subunit beta-2 (hbb2).